A 95-amino-acid polypeptide reads, in one-letter code: Histone-like DNA-binding protein (95 aa).

Belongs to the bacterial histone-like protein family.

The protein is Histone-like DNA-binding protein of Rickettsia felis (strain ATCC VR-1525 / URRWXCal2) (Rickettsia azadi).